Consider the following 637-residue polypeptide: 1-deoxy-D-xylulose-5-phosphate synthase (637 aa).

Residues His88 and 129-131 (GHS) contribute to the thiamine diphosphate site. Asp160 is a Mg(2+) binding site. Thiamine diphosphate-binding positions include 161–162 (GA), Asn189, Phe293, and Glu370. Asn189 contacts Mg(2+).

This sequence belongs to the transketolase family. DXPS subfamily. As to quaternary structure, homodimer. Requires Mg(2+) as cofactor. Thiamine diphosphate is required as a cofactor.

It carries out the reaction D-glyceraldehyde 3-phosphate + pyruvate + H(+) = 1-deoxy-D-xylulose 5-phosphate + CO2. Its pathway is metabolic intermediate biosynthesis; 1-deoxy-D-xylulose 5-phosphate biosynthesis; 1-deoxy-D-xylulose 5-phosphate from D-glyceraldehyde 3-phosphate and pyruvate: step 1/1. In terms of biological role, catalyzes the acyloin condensation reaction between C atoms 2 and 3 of pyruvate and glyceraldehyde 3-phosphate to yield 1-deoxy-D-xylulose-5-phosphate (DXP). The protein is 1-deoxy-D-xylulose-5-phosphate synthase of Acinetobacter baumannii (strain AYE).